The primary structure comprises 146 residues: 3-dehydroquinate dehydratase (146 aa).

Tyr-23 acts as the Proton acceptor in catalysis. Substrate contacts are provided by Asn-75, His-81, and Asp-88. The active-site Proton donor is His-101. Residues 102-103 and Arg-112 contribute to the substrate site; that span reads LS.

The protein belongs to the type-II 3-dehydroquinase family. Homododecamer.

The catalysed reaction is 3-dehydroquinate = 3-dehydroshikimate + H2O. It functions in the pathway metabolic intermediate biosynthesis; chorismate biosynthesis; chorismate from D-erythrose 4-phosphate and phosphoenolpyruvate: step 3/7. In terms of biological role, catalyzes a trans-dehydration via an enolate intermediate. The sequence is that of 3-dehydroquinate dehydratase from Saccharophagus degradans (strain 2-40 / ATCC 43961 / DSM 17024).